The chain runs to 705 residues: Prolyl endopeptidase (705 aa).

Positions 1–20 (MKYNKLSVAVAAFAFAAVSA) are cleaved as a signal peptide. Residues Ser556 and His675 each act as charge relay system in the active site.

The protein belongs to the peptidase S9A family. In terms of assembly, monomer.

It is found in the periplasm. The catalysed reaction is Hydrolysis of Pro-|-Xaa &gt;&gt; Ala-|-Xaa in oligopeptides.. Functionally, cleaves peptide bonds on the C-terminal side of prolyl residues within peptides that are up to approximately 30 amino acids long. Has an absolute requirement for an X-Pro bond in the trans configuration immediately preceding the Pro-Y scissible bond. The protein is Prolyl endopeptidase (f1pep1) of Elizabethkingia meningoseptica (Chryseobacterium meningosepticum).